Consider the following 341-residue polypeptide: Heat-inducible transcription repressor HrcA (341 aa).

This sequence belongs to the HrcA family.

Functionally, negative regulator of class I heat shock genes (grpE-dnaK-dnaJ and groELS operons). Prevents heat-shock induction of these operons. The protein is Heat-inducible transcription repressor HrcA of Brevibacillus brevis (strain 47 / JCM 6285 / NBRC 100599).